A 395-amino-acid polypeptide reads, in one-letter code: Trans-2-enoyl-CoA reductase [NADH] (395 aa).

NAD(+)-binding positions include 47–52 (GASTGY), 73–74 (FE), 110–111 (DA), and 138–139 (LA). Residue Tyr-224 participates in substrate binding. Residue Tyr-234 is the Proton donor of the active site. Residues Lys-243 and 272–274 (VVT) contribute to the NAD(+) site.

Belongs to the TER reductase family. Monomer.

The enzyme catalyses a 2,3-saturated acyl-CoA + NAD(+) = a (2E)-enoyl-CoA + NADH + H(+). It functions in the pathway lipid metabolism; fatty acid biosynthesis. In terms of biological role, involved in the fatty acid synthesis (FAS II). Catalyzes the reduction of a carbon-carbon double bond in an enoyl moiety that is covalently linked to a coenzyme A (CoA). This chain is Trans-2-enoyl-CoA reductase [NADH], found in Ruminiclostridium cellulolyticum (strain ATCC 35319 / DSM 5812 / JCM 6584 / H10) (Clostridium cellulolyticum).